Consider the following 93-residue polypeptide: Pyrimidine/purine nucleoside phosphorylase (93 aa).

It belongs to the nucleoside phosphorylase PpnP family.

The enzyme catalyses a purine D-ribonucleoside + phosphate = a purine nucleobase + alpha-D-ribose 1-phosphate. It catalyses the reaction adenosine + phosphate = alpha-D-ribose 1-phosphate + adenine. The catalysed reaction is cytidine + phosphate = cytosine + alpha-D-ribose 1-phosphate. It carries out the reaction guanosine + phosphate = alpha-D-ribose 1-phosphate + guanine. The enzyme catalyses inosine + phosphate = alpha-D-ribose 1-phosphate + hypoxanthine. It catalyses the reaction thymidine + phosphate = 2-deoxy-alpha-D-ribose 1-phosphate + thymine. The catalysed reaction is uridine + phosphate = alpha-D-ribose 1-phosphate + uracil. It carries out the reaction xanthosine + phosphate = alpha-D-ribose 1-phosphate + xanthine. Catalyzes the phosphorolysis of diverse nucleosides, yielding D-ribose 1-phosphate and the respective free bases. Can use uridine, adenosine, guanosine, cytidine, thymidine, inosine and xanthosine as substrates. Also catalyzes the reverse reactions. In Pseudomonas aeruginosa (strain LESB58), this protein is Pyrimidine/purine nucleoside phosphorylase.